A 426-amino-acid chain; its full sequence is Acetylglutamate kinase (426 aa).

Residues 1-252 (MASAKEISQY…PLESSVSITR (252 aa)) are acetylglutamate kinase. Residues 59 to 60 (AG), Arg81, and Asn170 each bind substrate. The segment at 253 to 426 (PADLAKELFT…CATRQPTLLG (174 aa)) is unknown. Residues 274-425 (ERVLRATSWD…HCATRQPTLL (152 aa)) enclose the N-acetyltransferase domain.

It in the N-terminal section; belongs to the acetylglutamate kinase family. ArgB subfamily.

It localises to the cytoplasm. The enzyme catalyses N-acetyl-L-glutamate + ATP = N-acetyl-L-glutamyl 5-phosphate + ADP. It functions in the pathway amino-acid biosynthesis; L-arginine biosynthesis; N(2)-acetyl-L-ornithine from L-glutamate: step 2/4. The chain is Acetylglutamate kinase (argB) from Xanthomonas campestris pv. campestris (strain ATCC 33913 / DSM 3586 / NCPPB 528 / LMG 568 / P 25).